The sequence spans 389 residues: 8-amino-7-oxononanoate synthase (389 aa).

Arginine 31 serves as a coordination point for substrate. 109–110 (GY) lines the pyridoxal 5'-phosphate pocket. Residue histidine 134 participates in substrate binding. Residues serine 180, 205–208 (DEAH), and 236–239 (TLSK) contribute to the pyridoxal 5'-phosphate site. Lysine 239 is subject to N6-(pyridoxal phosphate)lysine. Threonine 349 provides a ligand contact to substrate.

It belongs to the class-II pyridoxal-phosphate-dependent aminotransferase family. BioF subfamily. Homodimer. Requires pyridoxal 5'-phosphate as cofactor.

It carries out the reaction 6-carboxyhexanoyl-[ACP] + L-alanine + H(+) = (8S)-8-amino-7-oxononanoate + holo-[ACP] + CO2. It functions in the pathway cofactor biosynthesis; biotin biosynthesis. In terms of biological role, catalyzes the decarboxylative condensation of pimeloyl-[acyl-carrier protein] and L-alanine to produce 8-amino-7-oxononanoate (AON), [acyl-carrier protein], and carbon dioxide. The protein is 8-amino-7-oxononanoate synthase of Mycobacterium ulcerans (strain Agy99).